We begin with the raw amino-acid sequence, 505 residues long: Forkhead box protein O4 (505 aa).

Polar residues predominate over residues 1 to 10 (MDPGNENSAT). Disordered regions lie at residues 1 to 100 (MDPG…RRNA) and 176 to 246 (SWWM…CSRN). The residue at position 32 (T32) is a Phosphothreonine; by PKB/AKT1. A compositionally biased stretch (basic and acidic residues) spans 54–64 (LGEKVHTEGRS). The fork-head DNA-binding region spans 100 to 188 (AWGNQSYAEL…MLNPEGGKSG (89 aa)). The residue at position 197 (S197) is a Phosphoserine; by PKB/AKT1. The span at 205–216 (LRGRSKAPKKKP) shows a compositional bias: basic residues. Position 262 is a phosphoserine; by PKB/AKT1 (S262).

Interacts with CREBBP/CBP, CTNNB1, MYOCD, SIRT1, SRF and YWHAZ. Acetylated by CREBBP/CBP and deacetylated by SIRT1. Binding of YWHAZ inhibits DNA-binding. Interacts with USP7; the interaction is enhanced in presence of hydrogen peroxide and occurs independently of TP53. Interacts with NLK, and this inhibits monoubiquitination and transcriptional activity. Interacts with FOXK1; the interaction inhibits MEF2C transactivation activity. Acetylation by CREBBP/CBP, which is induced by peroxidase stress, inhibits transcriptional activity. Deacetylation by SIRT1 is NAD-dependent and stimulates transcriptional activity. In terms of processing, phosphorylation by PKB/AKT1 inhibits transcriptional activity and is responsible for cytoplasmic localization. May be phosphorylated at multiple sites by NLK. Post-translationally, monoubiquitinated; monoubiquitination is induced by oxidative stress and reduced by deacetylase inhibitors; results in its relocalization to the nucleus and its increased transcriptional activity. Deubiquitinated by USP7; deubiquitination is induced by oxidative stress; enhances its interaction with USP7 and consequently, deubiquitination; increases its translocation to the cytoplasm and inhibits its transcriptional activity. Hydrogene-peroxide-induced ubiquitination and USP7-mediated deubiquitination have no major effect on its protein stability. In terms of tissue distribution, heart, brain, placenta, lung, liver, skeletal muscle, kidney and pancreas. Isoform zeta is most abundant in the liver, kidney, and pancreas.

Its subcellular location is the cytoplasm. The protein resides in the nucleus. Transcription factor involved in the regulation of the insulin signaling pathway. Binds to insulin-response elements (IREs) and can activate transcription of IGFBP1. Down-regulates expression of HIF1A and suppresses hypoxia-induced transcriptional activation of HIF1A-modulated genes. Also involved in negative regulation of the cell cycle. Involved in increased proteasome activity in embryonic stem cells (ESCs) by activating expression of PSMD11 in ESCs, leading to enhanced assembly of the 26S proteasome, followed by higher proteasome activity. The sequence is that of Forkhead box protein O4 (FOXO4) from Homo sapiens (Human).